The primary structure comprises 359 residues: Dual-specificity RNA methyltransferase RlmN (359 aa).

Glu-98 serves as the catalytic Proton acceptor. The Radical SAM core domain occupies Glu-104–Arg-329. The cysteines at positions 111 and 340 are disulfide-linked. Residues Cys-118, Cys-122, and Cys-125 each coordinate [4Fe-4S] cluster. Residues Gly-166–Glu-167, Ser-198, Ser-220–His-222, and Asn-297 each bind S-adenosyl-L-methionine. Cys-340 (S-methylcysteine intermediate) is an active-site residue.

Belongs to the radical SAM superfamily. RlmN family. [4Fe-4S] cluster is required as a cofactor.

Its subcellular location is the cytoplasm. The enzyme catalyses adenosine(2503) in 23S rRNA + 2 reduced [2Fe-2S]-[ferredoxin] + 2 S-adenosyl-L-methionine = 2-methyladenosine(2503) in 23S rRNA + 5'-deoxyadenosine + L-methionine + 2 oxidized [2Fe-2S]-[ferredoxin] + S-adenosyl-L-homocysteine. The catalysed reaction is adenosine(37) in tRNA + 2 reduced [2Fe-2S]-[ferredoxin] + 2 S-adenosyl-L-methionine = 2-methyladenosine(37) in tRNA + 5'-deoxyadenosine + L-methionine + 2 oxidized [2Fe-2S]-[ferredoxin] + S-adenosyl-L-homocysteine. Functionally, specifically methylates position 2 of adenine 2503 in 23S rRNA and position 2 of adenine 37 in tRNAs. m2A2503 modification seems to play a crucial role in the proofreading step occurring at the peptidyl transferase center and thus would serve to optimize ribosomal fidelity. In Halorhodospira halophila (strain DSM 244 / SL1) (Ectothiorhodospira halophila (strain DSM 244 / SL1)), this protein is Dual-specificity RNA methyltransferase RlmN.